The following is a 336-amino-acid chain: Quinolinate synthase (336 aa).

Positions 25 and 42 each coordinate iminosuccinate. Cys-86 contacts [4Fe-4S] cluster. Iminosuccinate is bound by residues 117–119 and Ser-138; that span reads YIN. Cys-198 serves as a coordination point for [4Fe-4S] cluster. Residues 224–226 and Thr-241 contribute to the iminosuccinate site; that span reads HPE. Position 288 (Cys-288) interacts with [4Fe-4S] cluster.

The protein belongs to the quinolinate synthase family. Type 3 subfamily. It depends on [4Fe-4S] cluster as a cofactor.

It is found in the cytoplasm. The catalysed reaction is iminosuccinate + dihydroxyacetone phosphate = quinolinate + phosphate + 2 H2O + H(+). The protein operates within cofactor biosynthesis; NAD(+) biosynthesis; quinolinate from iminoaspartate: step 1/1. In terms of biological role, catalyzes the condensation of iminoaspartate with dihydroxyacetone phosphate to form quinolinate. This Helicobacter pylori (strain HPAG1) protein is Quinolinate synthase.